A 338-amino-acid chain; its full sequence is RNA 3'-terminal phosphate cyclase (338 aa).

Residues Q103 and 283-287 each bind ATP; that span reads YLADQ. Catalysis depends on H308, which acts as the Tele-AMP-histidine intermediate.

This sequence belongs to the RNA 3'-terminal cyclase family. Type 1 subfamily.

It localises to the cytoplasm. The catalysed reaction is a 3'-end 3'-phospho-ribonucleotide-RNA + ATP = a 3'-end 2',3'-cyclophospho-ribonucleotide-RNA + AMP + diphosphate. Functionally, catalyzes the conversion of 3'-phosphate to a 2',3'-cyclic phosphodiester at the end of RNA. The mechanism of action of the enzyme occurs in 3 steps: (A) adenylation of the enzyme by ATP; (B) transfer of adenylate to an RNA-N3'P to produce RNA-N3'PP5'A; (C) and attack of the adjacent 2'-hydroxyl on the 3'-phosphorus in the diester linkage to produce the cyclic end product. The biological role of this enzyme is unknown but it is likely to function in some aspects of cellular RNA processing. The protein is RNA 3'-terminal phosphate cyclase of Escherichia coli O17:K52:H18 (strain UMN026 / ExPEC).